Reading from the N-terminus, the 323-residue chain is V-type ATP synthase subunit C (323 aa).

Belongs to the V-ATPase V0D/AC39 subunit family.

Functionally, produces ATP from ADP in the presence of a proton gradient across the membrane. This is V-type ATP synthase subunit C from Thermus thermophilus (strain ATCC BAA-163 / DSM 7039 / HB27).